We begin with the raw amino-acid sequence, 377 residues long: Beta sliding clamp (377 aa).

Belongs to the beta sliding clamp family. Forms a ring-shaped head-to-tail homodimer around DNA which binds and tethers DNA polymerases and other proteins to the DNA. The DNA replisome complex has a single clamp-loading complex (3 tau and 1 each of delta, delta', psi and chi subunits) which binds 3 Pol III cores (1 core on the leading strand and 2 on the lagging strand) each with a beta sliding clamp dimer. Additional proteins in the replisome are other copies of gamma, psi and chi, Ssb, DNA helicase and RNA primase.

It localises to the cytoplasm. Functionally, confers DNA tethering and processivity to DNA polymerases and other proteins. Acts as a clamp, forming a ring around DNA (a reaction catalyzed by the clamp-loading complex) which diffuses in an ATP-independent manner freely and bidirectionally along dsDNA. Initially characterized for its ability to contact the catalytic subunit of DNA polymerase III (Pol III), a complex, multichain enzyme responsible for most of the replicative synthesis in bacteria; Pol III exhibits 3'-5' exonuclease proofreading activity. The beta chain is required for initiation of replication as well as for processivity of DNA replication. This is Beta sliding clamp (dnaN) from Staphylococcus aureus (strain COL).